Consider the following 211-residue polypeptide: Small ribosomal subunit protein uS3 (211 aa).

The region spanning 38 to 106 (LRKFIKKAFY…NIELNIIEVK (69 aa)) is the KH type-2 domain.

This sequence belongs to the universal ribosomal protein uS3 family. In terms of assembly, part of the 30S ribosomal subunit. Forms a tight complex with proteins S10 and S14.

Functionally, binds the lower part of the 30S subunit head. Binds mRNA in the 70S ribosome, positioning it for translation. This is Small ribosomal subunit protein uS3 from Ehrlichia ruminantium (strain Welgevonden).